The chain runs to 188 residues: Elongation factor P (188 aa).

This sequence belongs to the elongation factor P family.

The protein resides in the cytoplasm. The protein operates within protein biosynthesis; polypeptide chain elongation. Involved in peptide bond synthesis. Stimulates efficient translation and peptide-bond synthesis on native or reconstituted 70S ribosomes in vitro. Probably functions indirectly by altering the affinity of the ribosome for aminoacyl-tRNA, thus increasing their reactivity as acceptors for peptidyl transferase. This Christiangramia forsetii (strain DSM 17595 / CGMCC 1.15422 / KT0803) (Gramella forsetii) protein is Elongation factor P.